Here is a 397-residue protein sequence, read N- to C-terminus: Calponin-like protein clik-2 (397 aa).

6 Calponin-like repeats span residues 29 to 54 (LSQQ…RWNI), 73 to 98 (LRVQ…RFQV), 119 to 144 (IPKQ…RNQV), 161 to 189 (LCFQ…RQAT), 209 to 234 (TPWY…RDVL), and 255 to 280 (VPLQ…RNTQ). A disordered region spans residues 301 to 397 (EETKPPGSAS…EEEEEEEEDE (97 aa)). A compositionally biased stretch (basic and acidic residues) spans 321–332 (KFEERESSRQSE). Composition is skewed to acidic residues over residues 344-360 (VEPE…EEKI) and 367-397 (EEEE…EEDE).

It belongs to the calponin family. As to expression, expressed in pharyngeal muscle cells (at protein level).

In terms of biological role, required for pharyngeal pumping. This chain is Calponin-like protein clik-2, found in Caenorhabditis elegans.